The primary structure comprises 95 residues: Aspartyl/glutamyl-tRNA(Asn/Gln) amidotransferase subunit C (95 aa).

Belongs to the GatC family. In terms of assembly, heterotrimer of A, B and C subunits.

It catalyses the reaction L-glutamyl-tRNA(Gln) + L-glutamine + ATP + H2O = L-glutaminyl-tRNA(Gln) + L-glutamate + ADP + phosphate + H(+). The enzyme catalyses L-aspartyl-tRNA(Asn) + L-glutamine + ATP + H2O = L-asparaginyl-tRNA(Asn) + L-glutamate + ADP + phosphate + 2 H(+). In terms of biological role, allows the formation of correctly charged Asn-tRNA(Asn) or Gln-tRNA(Gln) through the transamidation of misacylated Asp-tRNA(Asn) or Glu-tRNA(Gln) in organisms which lack either or both of asparaginyl-tRNA or glutaminyl-tRNA synthetases. The reaction takes place in the presence of glutamine and ATP through an activated phospho-Asp-tRNA(Asn) or phospho-Glu-tRNA(Gln). In Clostridium botulinum (strain 657 / Type Ba4), this protein is Aspartyl/glutamyl-tRNA(Asn/Gln) amidotransferase subunit C.